A 471-amino-acid polypeptide reads, in one-letter code: Cysteine--tRNA ligase (471 aa).

A Zn(2+)-binding site is contributed by C30. Residues 32-42 carry the 'HIGH' region motif; the sequence is PTVYNFAHIGN. Residues C212, H237, and E241 each coordinate Zn(2+). The 'KMSKS' region motif lies at 270-274; that stretch reads KMSKS. K273 contacts ATP.

The protein belongs to the class-I aminoacyl-tRNA synthetase family. Monomer. Zn(2+) serves as cofactor.

The protein resides in the cytoplasm. It carries out the reaction tRNA(Cys) + L-cysteine + ATP = L-cysteinyl-tRNA(Cys) + AMP + diphosphate. The chain is Cysteine--tRNA ligase from Leptospira interrogans serogroup Icterohaemorrhagiae serovar Lai (strain 56601).